The primary structure comprises 164 residues: Small ribosomal subunit protein uS5 (164 aa).

Residues 10 to 73 (LEERVVAINR…EAAKKNMIEV (64 aa)) enclose the S5 DRBM domain.

This sequence belongs to the universal ribosomal protein uS5 family. Part of the 30S ribosomal subunit. Contacts proteins S4 and S8.

Its function is as follows. With S4 and S12 plays an important role in translational accuracy. In terms of biological role, located at the back of the 30S subunit body where it stabilizes the conformation of the head with respect to the body. In Streptococcus pyogenes serotype M1, this protein is Small ribosomal subunit protein uS5.